Reading from the N-terminus, the 240-residue chain is Large ribosomal subunit protein uL2 (240 aa).

The span at 1–12 (MGRRIQGQRRGR) shows a compositional bias: basic residues. Disordered stretches follow at residues 1-21 (MGRR…RAPS) and 198-240 (VDHP…GSNK). The span at 221-231 (PPGRKVGDIAS) shows a compositional bias: basic and acidic residues.

The protein belongs to the universal ribosomal protein uL2 family. As to quaternary structure, part of the 50S ribosomal subunit. Forms a bridge to the 30S subunit in the 70S ribosome.

In terms of biological role, one of the primary rRNA binding proteins. Required for association of the 30S and 50S subunits to form the 70S ribosome, for tRNA binding and peptide bond formation. It has been suggested to have peptidyltransferase activity; this is somewhat controversial. Makes several contacts with the 16S rRNA in the 70S ribosome. This is Large ribosomal subunit protein uL2 from Halorubrum lacusprofundi (strain ATCC 49239 / DSM 5036 / JCM 8891 / ACAM 34).